A 223-amino-acid chain; its full sequence is Neurotrophic factor BDNF precursor form (223 aa).

The first 5 residues, 1–5 (SCMKA), serve as a signal peptide directing secretion. Positions 6–114 (APMKEISIRG…AANMSMRVRR (109 aa)) are excised as a propeptide. Asn-107 carries an N-linked (GlcNAc...) asparagine glycan. 2 cysteine pairs are disulfide-bonded: Cys-127–Cys-194 and Cys-172–Cys-223.

The protein belongs to the NGF-beta family.

It localises to the secreted. Functionally, promotes the survival of neuronal populations that are all located either in the central nervous system or directly connected to it. This chain is Neurotrophic factor BDNF precursor form (BDNF), found in Acrochordus javanicus (Javan wart snake).